The primary structure comprises 341 residues: UDP-3-O-acylglucosamine N-acyltransferase 2 (341 aa).

The active-site Proton acceptor is His-254.

This sequence belongs to the transferase hexapeptide repeat family. LpxD subfamily. As to quaternary structure, homotrimer.

The enzyme catalyses a UDP-3-O-[(3R)-3-hydroxyacyl]-alpha-D-glucosamine + a (3R)-hydroxyacyl-[ACP] = a UDP-2-N,3-O-bis[(3R)-3-hydroxyacyl]-alpha-D-glucosamine + holo-[ACP] + H(+). It participates in bacterial outer membrane biogenesis; LPS lipid A biosynthesis. Catalyzes the N-acylation of UDP-3-O-acylglucosamine using 3-hydroxyacyl-ACP as the acyl donor. Is involved in the biosynthesis of lipid A, a phosphorylated glycolipid that anchors the lipopolysaccharide to the outer membrane of the cell. In Nitrobacter winogradskyi (strain ATCC 25391 / DSM 10237 / CIP 104748 / NCIMB 11846 / Nb-255), this protein is UDP-3-O-acylglucosamine N-acyltransferase 2.